The chain runs to 325 residues: Tetraacyldisaccharide 4'-kinase (325 aa).

55–62 (TAGGNGKT) lines the ATP pocket.

It belongs to the LpxK family.

The catalysed reaction is a lipid A disaccharide + ATP = a lipid IVA + ADP + H(+). It participates in glycolipid biosynthesis; lipid IV(A) biosynthesis; lipid IV(A) from (3R)-3-hydroxytetradecanoyl-[acyl-carrier-protein] and UDP-N-acetyl-alpha-D-glucosamine: step 6/6. Functionally, transfers the gamma-phosphate of ATP to the 4'-position of a tetraacyldisaccharide 1-phosphate intermediate (termed DS-1-P) to form tetraacyldisaccharide 1,4'-bis-phosphate (lipid IVA). The sequence is that of Tetraacyldisaccharide 4'-kinase from Salmonella typhi.